The primary structure comprises 71 residues: Disintegrin ussuristatin-2 (71 aa).

Residues 1-71 (EAGEECDCGA…QSADCPRNGF (71 aa)) form the Disintegrin domain. Intrachain disulfides connect cysteine 6/cysteine 21, cysteine 8/cysteine 16, cysteine 15/cysteine 38, cysteine 29/cysteine 35, cysteine 34/cysteine 59, and cysteine 47/cysteine 66. Positions 51-53 (KGD) match the Cell attachment site; atypical (KGD) motif.

The protein belongs to the venom metalloproteinase (M12B) family. P-II subfamily. P-IId sub-subfamily. In terms of assembly, homodimer. As to expression, expressed by the venom gland.

Its subcellular location is the secreted. Suppress platelet aggregation induced by ADP, collagen, thrombin, and epinephrine (IC(50)=170-330 nM). Also dose-dependently inhibits the adhesion of human melanoma cells to fibrinogen but not to fibronectin. The sequence is that of Disintegrin ussuristatin-2 from Gloydius ussuriensis (Ussuri mamushi).